Here is an 868-residue protein sequence, read N- to C-terminus: Probable beta-glucosidase F (868 aa).

Positions 1–20 (MAHRWLILALVAAAAPRALA) are cleaved as a signal peptide. Residues 21–40 (SPGPSLNERQSDDEPFSPPY) form a disordered region. Residues Asn-65, Asn-73, and Asn-257 are each glycosylated (N-linked (GlcNAc...) asparagine). The active site involves Asp-285. N-linked (GlcNAc...) asparagine glycans are attached at residues Asn-328, Asn-360, Asn-395, Asn-421, and Asn-726. The interval 731 to 752 (YPYPDGYSTDPQPPPRAGGAEG) is disordered.

Belongs to the glycosyl hydrolase 3 family.

The protein resides in the secreted. The catalysed reaction is Hydrolysis of terminal, non-reducing beta-D-glucosyl residues with release of beta-D-glucose.. It participates in glycan metabolism; cellulose degradation. Beta-glucosidases are one of a number of cellulolytic enzymes involved in the degradation of cellulosic biomass. Catalyzes the last step releasing glucose from the inhibitory cellobiose. This chain is Probable beta-glucosidase F (bglF), found in Emericella nidulans (strain FGSC A4 / ATCC 38163 / CBS 112.46 / NRRL 194 / M139) (Aspergillus nidulans).